The primary structure comprises 434 residues: Pancreatic lipase-related protein 2 (434 aa).

Residues Cys4 and Cys10 are joined by a disulfide bond. Residues 76–88 (IHGFTDSGENSWL) form a required for galactolipase activity region. The cysteines at positions 92 and 103 are disulfide-linked. Ser154 functions as the Nucleophile in the catalytic mechanism. The Charge relay system role is filled by Asp178. Ca(2+) is bound by residues Glu189, Arg192, Asp194, and Asp197. Cys239 and Cys245 are disulfide-bonded. The segment at 240-244 (KTGIS) is required for galactolipase activity. His247 acts as the Charge relay system in catalysis. Cystine bridges form between Cys269–Cys280 and Cys283–Cys288. The N-linked (GlcNAc...) asparagine glycan is linked to Asn318. Residues 322–434 (WRYKVTVTLS…ENVEQTLSPC (113 aa)) enclose the PLAT domain. A disulfide bridge connects residues Cys418 and Cys434.

This sequence belongs to the AB hydrolase superfamily. Lipase family. As to expression, pancreas.

It is found in the secreted. The protein localises to the zymogen granule membrane. The protein resides in the cell projection. It localises to the neuron projection. The catalysed reaction is a triacylglycerol + H2O = a diacylglycerol + a fatty acid + H(+). It carries out the reaction a 1,2-diacyl-3-O-(beta-D-galactosyl)-sn-glycerol + 2 H2O = 3-beta-D-galactosyl-sn-glycerol + 2 a fatty acid + 2 H(+). The enzyme catalyses 1,2,3-tri-(9Z-octadecenoyl)-glycerol + H2O = di-(9Z)-octadecenoylglycerol + (9Z)-octadecenoate + H(+). It catalyses the reaction di-(9Z)-octadecenoylglycerol + H2O = (9Z-octadecenoyl)-glycerol + (9Z)-octadecenoate + H(+). The catalysed reaction is (9Z-octadecenoyl)-glycerol + H2O = glycerol + (9Z)-octadecenoate + H(+). It carries out the reaction 1-(9Z-octadecenoyl)-glycerol + H2O = glycerol + (9Z)-octadecenoate + H(+). The enzyme catalyses 1,2,3-tripropanoylglycerol + H2O = dipropanoylglycerol + propanoate + H(+). It catalyses the reaction 1,2,3-tributanoylglycerol + H2O = dibutanoylglycerol + butanoate + H(+). The catalysed reaction is 1,2,3-trioctanoylglycerol + H2O = dioctanoylglycerol + octanoate + H(+). It carries out the reaction 1,2-didecanoylglycerol + H2O = decanoylglycerol + decanoate + H(+). The enzyme catalyses long chain 1,2-diacyl-3-O-beta-D-galactosyl-sn-glycerol + H2O = long chain acyl-3-O-beta-D-galactosyl-sn-glycerol + a fatty acid + H(+). It catalyses the reaction 1,2-dioctanoyl-3-O-beta-D-galactosyl-sn-glycerol + H2O = octanoyl-3-(beta-D-galactosyl)-sn-glycerol + octanoate + H(+). The catalysed reaction is 1,2-didodecanoyl-3-beta-D-galactosyl-sn-glycerol + H2O = dodecanoyl-3-beta-D-galactosyl-sn-glycerol + dodecanoate + H(+). It carries out the reaction 1-beta-D-galactosyl-2,3-didodecanoyl-sn-glycerol + H2O = 1-beta-D-galactosyl-dodecanoyl-sn-glycerol + dodecanoate + H(+). The enzyme catalyses a 1,2-diacyl-3-O-[alpha-D-galactosyl-(1-&gt;6)-beta-D-galactosyl]-sn-glycerol + H2O = acyl-3-O-[alpha-D-galactosyl-(1-&gt;6)-beta-D-galactosyl]-sn-glycerol + a fatty acid + H(+). It catalyses the reaction long chain 1,2-diacyl-3-O-[alpha-D-galactosyl-(1-&gt;6)-beta-D-galactosyl]-sn-glycerol + H2O = long chain acyl-3-O-[alpha-D-galactosyl-(1-&gt;6)-beta-D-galactosyl]-sn-glycerol + a fatty acid + H(+). The catalysed reaction is 1,2-dioctanoyl-3-O-[alpha-D-galactosyl-(1-&gt;6)-beta-D-galactosyl]-sn-glycerol + H2O = octanoyl-3-O-[alpha-D-galactosyl-(1-&gt;6)-beta-D-galactosyl]-sn-glycerol + octanoate + H(+). It carries out the reaction 1,2-didodecanoyl-3-O-[alpha-D-galactosyl-(1-&gt;6)-beta-D-galactosyl]-sn-glycerol + H2O = dodecanoyl-3-O-[alpha-D-galactosyl-(1-&gt;6)-beta-D-galactosyl]-sn-glycerol + dodecanoate + H(+). The enzyme catalyses a 1,2-diacyl-sn-glycero-3-phosphocholine + H2O = a monoacyl-sn-glycero-3-phosphocholine + a fatty acid + H(+). It functions in the pathway glycerolipid metabolism; triacylglycerol degradation. Its pathway is glycolipid metabolism. Its activity is regulated as follows. CLPS stimulates triacylglycerol lipase activity. Not inhibited by bile salts. Lipase that primarily hydrolyzes triglycerides and galactosylglycerides. In neonates, may play a major role in pancreatic digestion of dietary fats such as milk fat globules enriched in long-chain triglycerides. Hydrolyzes short-, medium- and long-chain fatty acyls in triglycerides without apparent positional specificity. Can completely deacylate triacylglycerols. When the liver matures and bile salt synthesis increases, likely functions mainly as a galactolipase and monoacylglycerol lipase. Hydrolyzes monogalactosyldiglycerols (MGDG) and digalactosyldiacylglycerols (DGDG) present in a plant-based diet, releasing long-chain polyunsaturated fatty acids. Hydrolyzes medium- and long-chain fatty acyls in galactolipids. May act together with LIPF to hydrolyze partially digested triglycerides. Hydrolyzes long-chain monoglycerides with high efficiency. In cytotoxic T cells, contributes to perforin-dependent cell lysis, but is unlikely to mediate direct cytotoxicity. Also has low phospholipase activity. In neurons, required for the localization of the phospholipid 1-oleoyl-2-palmitoyl-PC (OPPC) to neurite tips through acyl chain remodeling of membrane phospholipids. The resulting OPPC-rich lipid membrane domain recruits the t-SNARE protein STX4 by selectively interacting with the STX4 transmembrane domain and this promotes surface expression of the dopamine transporter SLC6A3/DAT at neurite tips by facilitating fusion of SLC6A3-containing transport vesicles with the plasma membrane. The polypeptide is Pancreatic lipase-related protein 2 (Cavia porcellus (Guinea pig)).